The sequence spans 1772 residues: Putative stereocilin-like protein (1772 aa).

Residues 1–25 form the signal peptide; sequence MALSLWPLLLLLLLLLLLSFAVTLA. N-linked (GlcNAc...) asparagine glycans are attached at residues N65, N427, N476, and N565.

This sequence belongs to the stereocilin family.

It localises to the secreted. This is Putative stereocilin-like protein (STRCP1) from Homo sapiens (Human).